A 576-amino-acid chain; its full sequence is MAGUK p55 subfamily member 2 (576 aa).

L27 domains follow at residues Ser8–Gln60 and Leu84–Pro142. Ser42 bears the Phosphoserine mark. At Thr141 the chain carries Phosphothreonine. The residue at position 145 (Ser145) is a Phosphoserine. Positions Glu185 to Leu240 constitute a PDZ domain. In terms of domain architecture, SH3 spans Pro249–Lys317. The Guanylate kinase-like domain maps to Arg374–Glu561.

Belongs to the MAGUK family. Can homomultimerise. Interacts with CACNG2. Interacts (via the SH3-Guanylate kinase-like sub-module) with DLG4/PSD95 and DLGAP1/GKAP. Interacts (via the PDZ domain) with CADM1 (via C-terminus). Interacts with KCNN2/SK2 (via N-terminal domain). Interacts with SRC. Post-translationally, phosphorylated by SRC.

It is found in the cytoplasm. It localises to the cytoskeleton. Its subcellular location is the membrane. The protein localises to the cell projection. The protein resides in the dendrite. It is found in the postsynaptic density. Functionally, postsynaptic MAGUK scaffold protein that links CADM1 cell adhesion molecules to core components of the postsynaptic density. In CA1 pyramidal neurons, required for synaptic KCNN2-containing channel function and long-term potentiation expression. Seems to negatively regulate SRC function in epithelial cells. The polypeptide is MAGUK p55 subfamily member 2 (Homo sapiens (Human)).